A 251-amino-acid chain; its full sequence is Ribosome maturation factor RimP (251 aa).

The disordered stretch occupies residues S176–H251. A compositionally biased stretch (acidic residues) spans D186–A196. Residues P216 to V226 are compositionally biased toward basic and acidic residues.

It belongs to the RimP family.

It localises to the cytoplasm. Required for maturation of 30S ribosomal subunits. The chain is Ribosome maturation factor RimP from Methylorubrum extorquens (strain PA1) (Methylobacterium extorquens).